A 751-amino-acid chain; its full sequence is Protein CLMP1 (751 aa).

A compositionally biased stretch (basic residues) spans 1–11 (MGKSGGRKKKS). Residues 1 to 33 (MGKSGGRKKKSGGSNSNSSQVNSSETSGLSKPS) form a disordered region. Over residues 12–28 (GGSNSNSSQVNSSETSG) the composition is skewed to low complexity. 3 TPR repeats span residues 51–84 (AHEL…IPKS), 89–124 (AVFH…QPGF), and 125–158 (TRAL…DPNH). One can recognise a PB1 domain in the interval 290–382 (WRPLKFVYDH…GMLRLHVVDV (93 aa)). The tract at residues 386–443 (QEPMLLEEEEEEVEEKPVIEEVISSPTESLSETEINTEKTDKEVEKEKASSSEDPETK) is disordered. A compositionally biased stretch (acidic residues) spans 390 to 399 (LLEEEEEEVE). A compositionally biased stretch (polar residues) spans 409-419 (SSPTESLSETE). Residues 421–443 (NTEKTDKEVEKEKASSSEDPETK) are compositionally biased toward basic and acidic residues. TPR repeat units lie at residues 434 to 468 (ASSS…DPDA), 481 to 514 (SEAL…AFFN), and 536 to 570 (EVVA…KPDF). The span at 630–648 (EQRMDDLKNPNSNKKEEVS) shows a compositional bias: basic and acidic residues. A disordered region spans residues 630 to 663 (EQRMDDLKNPNSNKKEEVSKRRKKQGGDGNEEVS).

In terms of assembly, interacts with myosin XI-K. Expressed in roots, stems, leaves, apex, flowers and seeds. Detected throughout the petiole in juvenile and young leaves, but restricted to the petiole midvein in older leaves. Expressed in hydathodes, at the base of the trichome, in the vascular cylinder of primary root and lateral root, in emerging lateral root primordia, in pollen and in developing embryos, but not in mature embryos.

The protein localises to the cytoplasm. Its function is as follows. Required for plastid separation and partitioning during cell division. Not involved in plastid constriction or in the organization of cytoplasmic actin cables. Contributes to polar growth of root hairs. The polypeptide is Protein CLMP1 (Arabidopsis thaliana (Mouse-ear cress)).